The following is a 236-amino-acid chain: Class B acid phosphatase (236 aa).

A signal peptide spans 1–23; it reads MRKLTLTLSALALALSLNSVADA. D68 acts as the Nucleophile in catalysis. Positions 68 and 70 each coordinate Mg(2+). D70 (proton donor) is an active-site residue. Residues 136–137 and K176 each bind substrate; that span reads TG. D191 is a binding site for Mg(2+).

It belongs to the class B bacterial acid phosphatase family. Homotetramer. Mg(2+) serves as cofactor.

Its subcellular location is the periplasm. The enzyme catalyses a phosphate monoester + H2O = an alcohol + phosphate. Its activity is regulated as follows. Activated by ethanol. Also activated by Co(2+), Zn(2+) and glycerol. Inhibited by EDTA, inorganic phosphate, nucleosides and Ca(2+). Unaffected by fluoride and tartrate. Functionally, dephosphorylates several organic phosphate monoesters including 5'-AMP, 3'-AMP, pNPP, PDP, 5'-UMP, 3'-UMP, G2P, glucose 6-P and ribose 5-P. No activity toward organic phosphate diesters. Also has a phosphotransferase activity catalyzing the transfer of low-energy phosphate groups from organic phosphate monoesters to free hydroxyl groups of various organic compounds. The chain is Class B acid phosphatase (aphA) from Morganella morganii (Proteus morganii).